The primary structure comprises 185 residues: dCTP deaminase, dUMP-forming (185 aa).

DCTP-binding positions include 99-104 (KSSIAR), Asp-117, 125-127 (TLE), Gln-146, Tyr-159, Lys-166, and Gln-170. The active-site Proton donor/acceptor is the Glu-127.

The protein belongs to the dCTP deaminase family. Homotrimer.

The enzyme catalyses dCTP + 2 H2O = dUMP + NH4(+) + diphosphate. Its pathway is pyrimidine metabolism; dUMP biosynthesis; dUMP from dCTP: step 1/1. Its function is as follows. Bifunctional enzyme that catalyzes both the deamination of dCTP to dUTP and the hydrolysis of dUTP to dUMP without releasing the toxic dUTP intermediate. The sequence is that of dCTP deaminase, dUMP-forming from Methanospirillum hungatei JF-1 (strain ATCC 27890 / DSM 864 / NBRC 100397 / JF-1).